The sequence spans 100 residues: Urease subunit gamma 2 (100 aa).

The protein belongs to the urease gamma subunit family. As to quaternary structure, heterotrimer of UreA (gamma), UreB (beta) and UreC (alpha) subunits. Three heterotrimers associate to form the active enzyme.

It localises to the cytoplasm. The catalysed reaction is urea + 2 H2O + H(+) = hydrogencarbonate + 2 NH4(+). It participates in nitrogen metabolism; urea degradation; CO(2) and NH(3) from urea (urease route): step 1/1. In Psychrobacter cryohalolentis (strain ATCC BAA-1226 / DSM 17306 / VKM B-2378 / K5), this protein is Urease subunit gamma 2.